A 437-amino-acid chain; its full sequence is Putative permease IIC component (437 aa).

The 436-residue stretch at 2-437 (FDYILSLGGT…LFLRKRELSE (436 aa)) folds into the PTS EIIC type-2 domain. 12 consecutive transmembrane segments (helical) span residues 5–25 (ILSLGGTVFVPIIMIVIGLIF), 35–55 (AGVTVGIGFVGMGLVIVMAID), 88–108 (ATAIGAMIIPVIFLLNVAMLV), 134–154 (LMTGSLIYGVLGAICHAALSL), 173–193 (ISIPQGYGSSSVPLFVLLDAI), 215–235 (GMVGDPVIIGVVLGLIFGLAA), 236–256 (GEGFKGCASLMITVAAIMVLF), 302–322 (TIAVGLLLIPIMLILASILPG), 325–345 (VLPLADLPVAPFFICMATVIH), 354–374 (ISGVIVMITVLLIATQFAPYF), 385–405 (FAGESAQISALSVGNMFGWSI), and 410–430 (SLGIIGVVVAVGIVASVVLFL).

The protein localises to the cell inner membrane. Functionally, the phosphoenolpyruvate-dependent sugar phosphotransferase system (PTS), a major carbohydrate active -transport system, catalyzes the phosphorylation of incoming sugar substrates concomitant with their translocation across the cell membrane. This Escherichia coli (strain K12) protein is Putative permease IIC component (sgcC).